We begin with the raw amino-acid sequence, 106 residues long: Iron-sulfur cluster assembly protein CyaY (106 aa).

It belongs to the frataxin family.

Functionally, involved in iron-sulfur (Fe-S) cluster assembly. May act as a regulator of Fe-S biogenesis. The chain is Iron-sulfur cluster assembly protein CyaY from Escherichia coli O139:H28 (strain E24377A / ETEC).